Reading from the N-terminus, the 365-residue chain is Cobalt-precorrin-5B C(1)-methyltransferase (365 aa).

Belongs to the CbiD family.

It carries out the reaction Co-precorrin-5B + S-adenosyl-L-methionine = Co-precorrin-6A + S-adenosyl-L-homocysteine. It participates in cofactor biosynthesis; adenosylcobalamin biosynthesis; cob(II)yrinate a,c-diamide from sirohydrochlorin (anaerobic route): step 6/10. Catalyzes the methylation of C-1 in cobalt-precorrin-5B to form cobalt-precorrin-6A. The polypeptide is Cobalt-precorrin-5B C(1)-methyltransferase (Variovorax paradoxus (strain S110)).